A 353-amino-acid polypeptide reads, in one-letter code: Photosystem II D2 protein (353 aa).

Residue Thr2 is modified to N-acetylthreonine. Thr2 carries the post-translational modification Phosphothreonine. The helical transmembrane segment at 41 to 61 (CAYFALGGWFTGTTFVTSWYT) threads the bilayer. His118 contacts chlorophyll a. Residues 125 to 141 (GFMLRQFELARSVQLRP) form a helical membrane-spanning segment. Positions 130 and 143 each coordinate pheophytin a. Residues 153–166 (VFVSVFLIYPLGQS) form a helical membrane-spanning segment. His198 is a binding site for chlorophyll a. Residues 208-228 (AALLCAIHGATVENTLFEDGD) form a helical membrane-spanning segment. A plastoquinone-binding residues include His215 and Phe262. A Fe cation-binding site is contributed by His215. His269 contributes to the Fe cation binding site. Residues 279–295 (GLWMSAIGVVGLALNLR) traverse the membrane as a helical segment.

It belongs to the reaction center PufL/M/PsbA/D family. PSII is composed of 1 copy each of membrane proteins PsbA, PsbB, PsbC, PsbD, PsbE, PsbF, PsbH, PsbI, PsbJ, PsbK, PsbL, PsbM, PsbT, PsbX, PsbY, PsbZ, Psb30/Ycf12, at least 3 peripheral proteins of the oxygen-evolving complex and a large number of cofactors. It forms dimeric complexes. The D1/D2 heterodimer binds P680, chlorophylls that are the primary electron donor of PSII, and subsequent electron acceptors. It shares a non-heme iron and each subunit binds pheophytin, quinone, additional chlorophylls, carotenoids and lipids. There is also a Cl(-1) ion associated with D1 and D2, which is required for oxygen evolution. The PSII complex binds additional chlorophylls, carotenoids and specific lipids. serves as cofactor.

It localises to the plastid. It is found in the chloroplast thylakoid membrane. It carries out the reaction 2 a plastoquinone + 4 hnu + 2 H2O = 2 a plastoquinol + O2. Its function is as follows. Photosystem II (PSII) is a light-driven water:plastoquinone oxidoreductase that uses light energy to abstract electrons from H(2)O, generating O(2) and a proton gradient subsequently used for ATP formation. It consists of a core antenna complex that captures photons, and an electron transfer chain that converts photonic excitation into a charge separation. The D1/D2 (PsbA/PsbD) reaction center heterodimer binds P680, the primary electron donor of PSII as well as several subsequent electron acceptors. D2 is needed for assembly of a stable PSII complex. This Drimys granadensis protein is Photosystem II D2 protein.